A 241-amino-acid chain; its full sequence is Biosynthetic peptidoglycan transglycosylase (241 aa).

Residues 18-38 traverse the membrane as a helical segment; the sequence is GVIGIIALWMAGILIFAFLPV.

Belongs to the glycosyltransferase 51 family.

The protein localises to the cell inner membrane. The catalysed reaction is [GlcNAc-(1-&gt;4)-Mur2Ac(oyl-L-Ala-gamma-D-Glu-L-Lys-D-Ala-D-Ala)](n)-di-trans,octa-cis-undecaprenyl diphosphate + beta-D-GlcNAc-(1-&gt;4)-Mur2Ac(oyl-L-Ala-gamma-D-Glu-L-Lys-D-Ala-D-Ala)-di-trans,octa-cis-undecaprenyl diphosphate = [GlcNAc-(1-&gt;4)-Mur2Ac(oyl-L-Ala-gamma-D-Glu-L-Lys-D-Ala-D-Ala)](n+1)-di-trans,octa-cis-undecaprenyl diphosphate + di-trans,octa-cis-undecaprenyl diphosphate + H(+). It functions in the pathway cell wall biogenesis; peptidoglycan biosynthesis. In terms of biological role, peptidoglycan polymerase that catalyzes glycan chain elongation from lipid-linked precursors. This chain is Biosynthetic peptidoglycan transglycosylase, found in Yersinia pseudotuberculosis serotype O:1b (strain IP 31758).